Consider the following 460-residue polypeptide: Bifunctional protein GlmU (460 aa).

Positions 1–232 (MALNVVILAA…AIEVEGANNR (232 aa)) are pyrophosphorylase. UDP-N-acetyl-alpha-D-glucosamine is bound by residues 8–11 (LAAG), Lys-22, Gln-73, 78–79 (GT), 100–102 (YGD), Gly-137, Glu-157, Asn-172, and Asn-230. Residue Asp-102 participates in Mg(2+) binding. Asn-230 lines the Mg(2+) pocket. The segment at 233–253 (VQLAQLERAYQAREAEKLMLA) is linker. Residues 254-460 (GANLRDPSRI…GWQRPVKIKK (207 aa)) are N-acetyltransferase. UDP-N-acetyl-alpha-D-glucosamine is bound by residues Arg-336 and Lys-354. The active-site Proton acceptor is the His-366. Positions 369 and 380 each coordinate UDP-N-acetyl-alpha-D-glucosamine. Residues Ala-383, 389–390 (NY), Ser-408, Ala-426, and Arg-443 each bind acetyl-CoA.

This sequence in the N-terminal section; belongs to the N-acetylglucosamine-1-phosphate uridyltransferase family. The protein in the C-terminal section; belongs to the transferase hexapeptide repeat family. As to quaternary structure, homotrimer. It depends on Mg(2+) as a cofactor.

It is found in the cytoplasm. It carries out the reaction alpha-D-glucosamine 1-phosphate + acetyl-CoA = N-acetyl-alpha-D-glucosamine 1-phosphate + CoA + H(+). It catalyses the reaction N-acetyl-alpha-D-glucosamine 1-phosphate + UTP + H(+) = UDP-N-acetyl-alpha-D-glucosamine + diphosphate. Its pathway is nucleotide-sugar biosynthesis; UDP-N-acetyl-alpha-D-glucosamine biosynthesis; N-acetyl-alpha-D-glucosamine 1-phosphate from alpha-D-glucosamine 6-phosphate (route II): step 2/2. It functions in the pathway nucleotide-sugar biosynthesis; UDP-N-acetyl-alpha-D-glucosamine biosynthesis; UDP-N-acetyl-alpha-D-glucosamine from N-acetyl-alpha-D-glucosamine 1-phosphate: step 1/1. The protein operates within bacterial outer membrane biogenesis; LPS lipid A biosynthesis. In terms of biological role, catalyzes the last two sequential reactions in the de novo biosynthetic pathway for UDP-N-acetylglucosamine (UDP-GlcNAc). The C-terminal domain catalyzes the transfer of acetyl group from acetyl coenzyme A to glucosamine-1-phosphate (GlcN-1-P) to produce N-acetylglucosamine-1-phosphate (GlcNAc-1-P), which is converted into UDP-GlcNAc by the transfer of uridine 5-monophosphate (from uridine 5-triphosphate), a reaction catalyzed by the N-terminal domain. The polypeptide is Bifunctional protein GlmU (Shewanella baltica (strain OS185)).